The chain runs to 356 residues: Tyrosine recombinase XerS (356 aa).

Residues 16 to 121 (LMPWYVLEYY…ALSSLYKYLT (106 aa)) enclose the Core-binding (CB) domain. The 186-residue stretch at 169–354 (GFLTYIDQEH…VSDEQKNALD (186 aa)) folds into the Tyr recombinase domain. Catalysis depends on residues Arg-210, Lys-234, His-306, Arg-309, and His-332. Tyr-341 functions as the O-(3'-phospho-DNA)-tyrosine intermediate in the catalytic mechanism.

The protein belongs to the 'phage' integrase family. XerS subfamily.

Its subcellular location is the cytoplasm. Its activity is regulated as follows. FtsK is required for recombination. Its function is as follows. Site-specific tyrosine recombinase, which acts by catalyzing the cutting and rejoining of the recombining DNA molecules. Essential to convert dimers of the bacterial chromosome into monomers to permit their segregation at cell division. This Streptococcus pneumoniae serotype 4 (strain ATCC BAA-334 / TIGR4) protein is Tyrosine recombinase XerS.